The sequence spans 180 residues: Inorganic pyrophosphatase (180 aa).

Positions 28, 42, and 54 each coordinate substrate. The Mg(2+) site is built by Asp66, Asp71, and Asp102. Tyr139 provides a ligand contact to substrate.

Belongs to the PPase family. In terms of assembly, homohexamer. The cofactor is Mg(2+).

Its subcellular location is the cytoplasm. It carries out the reaction diphosphate + H2O = 2 phosphate + H(+). Its function is as follows. Hydrolyzes PPi generated in anabolic reactions. In terms of biological role, catalyzes the hydrolysis of inorganic pyrophosphate (PPi) forming two phosphate ions. This Pseudanabaena sp. (strain PCC 6903) protein is Inorganic pyrophosphatase.